Reading from the N-terminus, the 349-residue chain is Rhodopsin (349 aa).

The Extracellular portion of the chain corresponds to 1-33 (TEGPYFYIPMSNATGVVRSPYEYPQYYLVYPAA). N-linked (GlcNAc...) asparagine glycosylation is present at Asn12. The helical transmembrane segment at 34 to 58 (FAVLGAYMFFLIIFGFPVNFLTLYV) threads the bilayer. Topologically, residues 59–70 (TIEHKKLRTPLN) are cytoplasmic. The chain crosses the membrane as a helical span at residues 71 to 93 (YILLNLAVADLFMVIGGFTTTIY). Over 94–107 (TSMHGYFVLGRLGC) the chain is Extracellular. Cys107 and Cys184 are disulfide-bonded. The helical transmembrane segment at 108 to 130 (NLEGFSATLGGMISLWSLVVLAV) threads the bilayer. Residues 131 to 133 (ERW) carry the 'Ionic lock' involved in activated form stabilization motif. The Cytoplasmic segment spans residues 131–149 (ERWVVVCKPMSNFRFGENH). A helical membrane pass occupies residues 150–170 (AIMGVTLTWAMGLACTVPPLV). The Extracellular segment spans residues 171 to 199 (GWSRYIPEGMQCSCGIDYYTRAEGFNNES). N-linked (GlcNAc...) asparagine glycosylation is present at Asn197. Residues 200 to 221 (FVLYMFVCHFSFPLVVIFFCYG) form a helical membrane-spanning segment. The Cytoplasmic segment spans residues 222-249 (RLLCAVKEAAAAQQESETTQRAEREVTR). The helical transmembrane segment at 250-271 (MVILMVIGFLVCWLPYASVAWY) threads the bilayer. Residues 272 to 283 (IFTHQGSEFGPL) lie on the Extracellular side of the membrane. The chain crosses the membrane as a helical span at residues 284–305 (FMTIPAFFAKSSAIYNPVIYIC). Lys293 carries the N6-(retinylidene)lysine modification. The Cytoplasmic segment spans residues 306–349 (LNKQFRQCMLTTLFCGKNPFEEEEGASSTKTEASSASSSSVSPA). Cys320 is lipidated: S-palmitoyl cysteine. The interval 326–349 (EEEEGASSTKTEASSASSSSVSPA) is disordered. Residues 331–349 (ASSTKTEASSASSSSVSPA) show a composition bias toward low complexity.

This sequence belongs to the G-protein coupled receptor 1 family. Opsin subfamily. In terms of processing, phosphorylated on some or all of the serine and threonine residues present in the C-terminal region. Post-translationally, contains one covalently linked retinal chromophore.

The protein localises to the membrane. It localises to the cell projection. It is found in the cilium. The protein resides in the photoreceptor outer segment. Photoreceptor required for image-forming vision at low light intensity. While most salt water fish species use retinal as chromophore, most freshwater fish use 3-dehydroretinal, or a mixture of retinal and 3-dehydroretinal. Light-induced isomerization of 11-cis to all-trans retinal triggers a conformational change that activates signaling via G-proteins. Subsequent receptor phosphorylation mediates displacement of the bound G-protein alpha subunit by arrestin and terminates signaling. The sequence is that of Rhodopsin (rho) from Myripristis berndti (Bigscale soldierfish).